Consider the following 264-residue polypeptide: Low molecular mass lipoprotein PBMHPC-23 (264 aa).

A signal peptide spans 1 to 23; sequence MKFLVVFAVVRACVTPACAEMSA.

It belongs to the 30 kDa lipoprotein family.

Its subcellular location is the secreted. The protein is Low molecular mass lipoprotein PBMHPC-23 of Bombyx mori (Silk moth).